We begin with the raw amino-acid sequence, 149 residues long: Large ribosomal subunit protein bL20m (149 aa).

Residues 1-9 (MVFLTAQLW) constitute a mitochondrion transit peptide.

This sequence belongs to the bacterial ribosomal protein bL20 family. Component of the mitochondrial large ribosomal subunit (mt-LSU). Mature mammalian 55S mitochondrial ribosomes consist of a small (28S) and a large (39S) subunit. The 28S small subunit contains a 12S ribosomal RNA (12S mt-rRNA) and 30 different proteins. The 39S large subunit contains a 16S rRNA (16S mt-rRNA), a copy of mitochondrial valine transfer RNA (mt-tRNA(Val)), which plays an integral structural role, and 52 different proteins. Interacts with OXA1L.

It is found in the mitochondrion. The chain is Large ribosomal subunit protein bL20m (MRPL20) from Homo sapiens (Human).